Here is a 252-residue protein sequence, read N- to C-terminus: Urease accessory protein UreD (252 aa).

Belongs to the UreD family. In terms of assembly, ureD, UreF and UreG form a complex that acts as a GTP-hydrolysis-dependent molecular chaperone, activating the urease apoprotein by helping to assemble the nickel containing metallocenter of UreC. The UreE protein probably delivers the nickel.

The protein localises to the cytoplasm. Functionally, required for maturation of urease via the functional incorporation of the urease nickel metallocenter. This chain is Urease accessory protein UreD, found in Streptomyces avermitilis (strain ATCC 31267 / DSM 46492 / JCM 5070 / NBRC 14893 / NCIMB 12804 / NRRL 8165 / MA-4680).